Here is a 336-residue protein sequence, read N- to C-terminus: Holliday junction branch migration complex subunit RuvB (336 aa).

The tract at residues 1-182 (MKERIVNLET…FGMSFRMQFY (182 aa)) is large ATPase domain (RuvB-L). Residues Leu-21, Arg-22, Gly-63, Lys-66, Thr-67, Ser-68, 129–131 (EDF), Arg-172, Tyr-182, and Arg-219 each bind ATP. A Mg(2+)-binding site is contributed by Thr-67. Positions 183–253 (SPSELALIIK…ITLHALNELG (71 aa)) are small ATPAse domain (RuvB-S). A head domain (RuvB-H) region spans residues 256 to 336 (ELGFDEADLA…IPTLKSQSLF (81 aa)). DNA is bound by residues Arg-310 and Arg-315.

The protein belongs to the RuvB family. In terms of assembly, homohexamer. Forms an RuvA(8)-RuvB(12)-Holliday junction (HJ) complex. HJ DNA is sandwiched between 2 RuvA tetramers; dsDNA enters through RuvA and exits via RuvB. An RuvB hexamer assembles on each DNA strand where it exits the tetramer. Each RuvB hexamer is contacted by two RuvA subunits (via domain III) on 2 adjacent RuvB subunits; this complex drives branch migration. In the full resolvosome a probable DNA-RuvA(4)-RuvB(12)-RuvC(2) complex forms which resolves the HJ.

It is found in the cytoplasm. It carries out the reaction ATP + H2O = ADP + phosphate + H(+). Functionally, the RuvA-RuvB-RuvC complex processes Holliday junction (HJ) DNA during genetic recombination and DNA repair, while the RuvA-RuvB complex plays an important role in the rescue of blocked DNA replication forks via replication fork reversal (RFR). RuvA specifically binds to HJ cruciform DNA, conferring on it an open structure. The RuvB hexamer acts as an ATP-dependent pump, pulling dsDNA into and through the RuvAB complex. RuvB forms 2 homohexamers on either side of HJ DNA bound by 1 or 2 RuvA tetramers; 4 subunits per hexamer contact DNA at a time. Coordinated motions by a converter formed by DNA-disengaged RuvB subunits stimulates ATP hydrolysis and nucleotide exchange. Immobilization of the converter enables RuvB to convert the ATP-contained energy into a lever motion, pulling 2 nucleotides of DNA out of the RuvA tetramer per ATP hydrolyzed, thus driving DNA branch migration. The RuvB motors rotate together with the DNA substrate, which together with the progressing nucleotide cycle form the mechanistic basis for DNA recombination by continuous HJ branch migration. Branch migration allows RuvC to scan DNA until it finds its consensus sequence, where it cleaves and resolves cruciform DNA. The protein is Holliday junction branch migration complex subunit RuvB of Helicobacter acinonychis (strain Sheeba).